The sequence spans 224 residues: MRIVITIGGSIIISEFSHEMFRAYADILNSLRDEHDLFVVVGGGRPARDYIGVARELGASEARCDDIGIDVTRLNARLLITALGDSAYPGVPENFREALEVAATGRIVVMGGTEPAHSTDAVGAILAETVEADLMINLTSVDGFYDRDPAKYPDARFYPEITASEMLEHLRGSDVRAGTYEFFDHTALHMIRRSGIRTMIVNGNDPENLLRALDGEIGTTVIPE.

9-10 lines the ATP pocket; that stretch reads GS. Gly43 is a binding site for UMP. 2 residues coordinate ATP: Gly44 and Arg48. UMP is bound by residues Asp65 and 113–119; that span reads TEPAHST. ATP is bound by residues Thr139, Tyr145, and Asp148.

It belongs to the UMP kinase family. Homohexamer.

It is found in the cytoplasm. The enzyme catalyses UMP + ATP = UDP + ADP. It participates in pyrimidine metabolism; CTP biosynthesis via de novo pathway; UDP from UMP (UMPK route): step 1/1. Inhibited by UTP. Its function is as follows. Catalyzes the reversible phosphorylation of UMP to UDP. This chain is Uridylate kinase, found in Methanothermobacter thermautotrophicus (strain ATCC 29096 / DSM 1053 / JCM 10044 / NBRC 100330 / Delta H) (Methanobacterium thermoautotrophicum).